We begin with the raw amino-acid sequence, 1303 residues long: Phosphoribosylformylglycinamidine synthase (1303 aa).

ATP contacts are provided by residues 308–319 and A679; that span reads GASTGSGGEIRD. Residues E719, N723, and D892 each coordinate Mg(2+). Positions 1003–1023 are disordered; it reads LRDNPACADQEHEAKKDNSDP. Positions 1011–1021 are enriched in basic and acidic residues; sequence DQEHEAKKDNS. Positions 1050 to 1303 constitute a Glutamine amidotransferase type-1 domain; that stretch reads MAILREQGVN…MFQNARKNIG (254 aa). C1143 (nucleophile) is an active-site residue. Residues H1268 and E1270 contribute to the active site.

It in the N-terminal section; belongs to the FGAMS family. As to quaternary structure, monomer.

The protein resides in the cytoplasm. It catalyses the reaction N(2)-formyl-N(1)-(5-phospho-beta-D-ribosyl)glycinamide + L-glutamine + ATP + H2O = 2-formamido-N(1)-(5-O-phospho-beta-D-ribosyl)acetamidine + L-glutamate + ADP + phosphate + H(+). It functions in the pathway purine metabolism; IMP biosynthesis via de novo pathway; 5-amino-1-(5-phospho-D-ribosyl)imidazole from N(2)-formyl-N(1)-(5-phospho-D-ribosyl)glycinamide: step 1/2. Functionally, phosphoribosylformylglycinamidine synthase involved in the purines biosynthetic pathway. Catalyzes the ATP-dependent conversion of formylglycinamide ribonucleotide (FGAR) and glutamine to yield formylglycinamidine ribonucleotide (FGAM) and glutamate. In Aliivibrio fischeri (strain ATCC 700601 / ES114) (Vibrio fischeri), this protein is Phosphoribosylformylglycinamidine synthase.